A 435-amino-acid polypeptide reads, in one-letter code: UDP-N-acetylmuramate--L-alanine ligase (435 aa).

Glycine 108–serine 114 is a binding site for ATP.

The protein belongs to the MurCDEF family.

The protein localises to the cytoplasm. The catalysed reaction is UDP-N-acetyl-alpha-D-muramate + L-alanine + ATP = UDP-N-acetyl-alpha-D-muramoyl-L-alanine + ADP + phosphate + H(+). Its pathway is cell wall biogenesis; peptidoglycan biosynthesis. Functionally, cell wall formation. The chain is UDP-N-acetylmuramate--L-alanine ligase from Exiguobacterium sp. (strain ATCC BAA-1283 / AT1b).